Consider the following 301-residue polypeptide: MSAGLETFALKEEDAIKLLACQTHVGAANCDFQMEQYVWKRRADGIHIIHLRKTWEKLLLAARAIAAIDNPGDVCVVSARPYAQRALLKFAAHTGSTPIFGRFTPGCLTNQIQKQFKEPRLLIVSDPRVDHQAVTEASYVGVPVISFCNTDSPLKFIDIAIPCNNKGVQSIGLMWWLLAREVLLIKGKMTRQTGFVLDDKEIMPDLYFYRNPEEQEKEELAEPREVKEPWPGVPPPEVAKIDEVVRSIGMYQTIGGVEPAKKLDFSMVEPVSDWAQETERAVQLDAAQQQEWGASTQNSNW.

The protein belongs to the universal ribosomal protein uS2 family. As to quaternary structure, component of the small ribosomal subunit. Mature ribosomes consist of a small (40S) and a large (60S) subunit. The 40S subunit contains about 33 different proteins and 1 molecule of RNA (18S). The 60S subunit contains about 49 different proteins and 3 molecules of RNA (28S, 5.8S and 5S). Interacts with ribosomal protein S21.

It localises to the cytoplasm. Its function is as follows. Required for the assembly and/or stability of the 40S ribosomal subunit. Required for the processing of the 20S rRNA-precursor to mature 18S rRNA in a late step of the maturation of 40S ribosomal subunits. This Brugia malayi (Filarial nematode worm) protein is Small ribosomal subunit protein uS2.